The primary structure comprises 129 residues: Small ribosomal subunit protein uS12 (129 aa).

Asp-89 is modified (3-methylthioaspartic acid). Positions Arg-110–Lys-129 are disordered.

The protein belongs to the universal ribosomal protein uS12 family. In terms of assembly, part of the 30S ribosomal subunit. Contacts proteins S8 and S17. May interact with IF1 in the 30S initiation complex.

In terms of biological role, with S4 and S5 plays an important role in translational accuracy. Interacts with and stabilizes bases of the 16S rRNA that are involved in tRNA selection in the A site and with the mRNA backbone. Located at the interface of the 30S and 50S subunits, it traverses the body of the 30S subunit contacting proteins on the other side and probably holding the rRNA structure together. The combined cluster of proteins S8, S12 and S17 appears to hold together the shoulder and platform of the 30S subunit. The sequence is that of Small ribosomal subunit protein uS12 from Rickettsia bellii (strain OSU 85-389).